Reading from the N-terminus, the 83-residue chain is MVVIRLARGGSKHRPFFNIVVADKRVRRDGRFIERIGFYNPIAKGGEEGLRIAQDRLTHWLGVGAQPSPTVERLVKQGAAKAA.

It belongs to the bacterial ribosomal protein bS16 family.

The polypeptide is Small ribosomal subunit protein bS16 (Polaromonas sp. (strain JS666 / ATCC BAA-500)).